A 303-amino-acid chain; its full sequence is D-alanine--D-alanine ligase (303 aa).

The ATP-grasp domain maps to lysine 100–glutamate 295. Glycine 127–threonine 180 contacts ATP. Mg(2+) contacts are provided by aspartate 249, glutamate 262, and asparagine 264.

The protein belongs to the D-alanine--D-alanine ligase family. The cofactor is Mg(2+). Mn(2+) is required as a cofactor.

The protein resides in the cytoplasm. The enzyme catalyses 2 D-alanine + ATP = D-alanyl-D-alanine + ADP + phosphate + H(+). Its pathway is cell wall biogenesis; peptidoglycan biosynthesis. Functionally, cell wall formation. This chain is D-alanine--D-alanine ligase, found in Nitratidesulfovibrio vulgaris (strain DP4) (Desulfovibrio vulgaris).